The following is a 758-amino-acid chain: Glucocorticoid receptor (758 aa).

2 disordered regions span residues 1 to 61 and 349 to 382; these read MDPG…SANG and GMSSSSFPVGFSSPKARPEASGSASSAPAKPSGP. Residues 1–386 form a modulating region; it reads MDPGGLKHSK…AKPSGPTHKI (386 aa). A compositionally biased stretch (low complexity) spans 26–42; it reads GSFSGDTGGSKSTTSTS. NR C4-type zinc fingers lie at residues 387–407 and 432–456; these read CLVCSDEASGCHYGVLTCGSC and CAGRNDCIIDKIRRKNCPACRFRKC. Positions 387–461 form a DNA-binding region, nuclear receptor; the sequence is CLVCSDEASG…RFRKCLQAGM (75 aa). Residues 462–498 form a hinge region; that stretch reads NLEARKNKKLIRLKGQQTTMEPNPPPPDERACALIPK. In terms of domain architecture, NR LBD spans 499–733; the sequence is SMPQLVPTML…FPEMLAEIIS (235 aa).

This sequence belongs to the nuclear hormone receptor family. NR3 subfamily. In terms of assembly, heteromultimeric cytoplasmic complex with HSP90AA1, HSPA1A/HSPA1B, and FKBP5 or another immunophilin such as PPID, STIP1, or the immunophilin homolog PPP5C. Upon ligand binding FKBP5 dissociates from the complex and FKBP4 takes its place, thereby linking the complex to dynein and mediating transport to the nucleus, where the complex dissociates. Directly interacts with UNC45A. Binds to DNA as a homodimer, and as heterodimer with NR3C2 or the retinoid X receptor. Binds STAT5A and STAT5B homodimers and heterodimers. Interacts with NRIP1, POU2F1, POU2F2 and TRIM28. Interacts with several coactivator complexes, including the SMARCA4 complex, CREBBP/EP300, TADA2L (Ada complex) and p160 coactivators such as NCOA2 and NCOA6. Interaction with BAG1 inhibits transactivation. Interacts with HEXIM1, PELP1 and TGFB1I1. Interacts with NCOA1, NCOA3, SMARCA4, SMARCC1, SMARCD1, and SMARCE1. In terms of processing, phosphorylated in the absence of hormone; becomes hyperphosphorylated in the presence of glucocorticoids. May be dephosphorylated by PPP5C, attenuates NR3C1 action. In terms of tissue distribution, isoform 1 is expressed in all tissues tested including liver, gills, intestine, skeletal muscle, kidney, heart, spleen, stomach, brain, pituitary, ovary, testis, skin and bladder. Isoform 2 is found only in testis.

It localises to the cytoplasm. Its subcellular location is the nucleus. It is found in the mitochondrion. The protein localises to the cytoskeleton. The protein resides in the spindle. It localises to the microtubule organizing center. Its subcellular location is the centrosome. Its function is as follows. Receptor for glucocorticoids (GC). Has a dual mode of action: as a transcription factor that binds to glucocorticoid response elements (GRE), both for nuclear and mitochondrial DNA, and as a modulator of other transcription factors. Affects inflammatory responses, cellular proliferation and differentiation in target tissues. Involved in chromatin remodeling. Plays a role in rapid mRNA degradation by binding to the 5' UTR of target mRNAs and interacting with PNRC2 in a ligand-dependent manner which recruits the RNA helicase UPF1 and the mRNA-decapping enzyme DCP1A, leading to RNA decay. Could act as a coactivator for STAT5-dependent transcription upon growth hormone (GH) stimulation and could reveal an essential role of hepatic GR in the control of body growth. Mediates glucocorticoid-induced apoptosis. Promotes accurate chromosome segregation during mitosis. May act as a tumor suppressor. May play a negative role in adipogenesis through the regulation of lipolytic and antilipogenic gene expression. This is Glucocorticoid receptor (nr3c1) from Oncorhynchus mykiss (Rainbow trout).